The primary structure comprises 106 residues: UPF0145 protein Fphi_1781 (106 aa).

It belongs to the UPF0145 family.

The sequence is that of UPF0145 protein Fphi_1781 from Francisella philomiragia subsp. philomiragia (strain ATCC 25017 / CCUG 19701 / FSC 153 / O#319-036).